Reading from the N-terminus, the 301-residue chain is GPN-loop GTPase 3 (301 aa).

Position 13 to 18 (13 to 18 (GAGKST)) interacts with GTP. The short motif at 70–72 (GPN) is the Gly-Pro-Asn (GPN)-loop; involved in dimer interface element. A GTP-binding site is contributed by 176-179 (SKMD). A disordered region spans residues 212 to 232 (IAEGQDAEDDESKAPDEKDQV). The span at 223–232 (SKAPDEKDQV) shows a compositional bias: basic and acidic residues.

The protein belongs to the GPN-loop GTPase family. Heterodimers with GPN1 or GPN2. Binds to RNA polymerase II (RNAPII).

Its function is as follows. Small GTPase required for proper nuclear import of RNA polymerase II and III (RNAPII and RNAPIII). May act at an RNAP assembly step prior to nuclear import. The polypeptide is GPN-loop GTPase 3 (Gibberella zeae (strain ATCC MYA-4620 / CBS 123657 / FGSC 9075 / NRRL 31084 / PH-1) (Wheat head blight fungus)).